A 421-amino-acid polypeptide reads, in one-letter code: C2H2 type master regulator of conidiophore development brlA (421 aa).

2 C2H2-type zinc fingers span residues phenylalanine 309–histidine 333 and histidine 339–histidine 364. The interval glutamate 379–aspartate 421 is disordered.

The protein localises to the nucleus. In terms of biological role, brlA, abaA and wetA are pivotal regulators of conidiophore development and conidium maturation. They act individually and together to regulate their own expression and that of numerous other sporulation-specific genes. Binds promoters of target genes at brlA response elements (BREs) containing the conserved sequence 5'-(C/A)(A/G)AGGG(G/A)-3'. Required for conidiophores formation. Controls expression of abaA. This is C2H2 type master regulator of conidiophore development brlA from Aspergillus oryzae (strain ATCC 42149 / RIB 40) (Yellow koji mold).